The primary structure comprises 341 residues: Retinol dehydrogenase 10-B (341 aa).

A helical; Signal-anchor membrane pass occupies residues I3–A23. Residue L40–V64 coordinates NADP(+). Substrate is bound at residue S197. Y210 serves as the catalytic Proton acceptor.

Belongs to the short-chain dehydrogenases/reductases (SDR) family.

Its subcellular location is the microsome membrane. It localises to the endoplasmic reticulum membrane. The catalysed reaction is all-trans-retinol + NADP(+) = all-trans-retinal + NADPH + H(+). It functions in the pathway cofactor metabolism; retinol metabolism. Functionally, retinol dehydrogenase with a clear preference for NADP. Converts all-trans-retinol to all-trans-retinal. Has no detectable activity towards 11-cis-retinol, 9-cis-retinol and 13-cis-retinol. This is Retinol dehydrogenase 10-B (rdh10-b) from Xenopus laevis (African clawed frog).